A 336-amino-acid chain; its full sequence is Probable GTPase MT1543 (336 aa).

GTP contacts are provided by residues 67 to 75 (GVPGVGKST), Asp209, and 245 to 247 (SAV).

Belongs to the SIMIBI class G3E GTPase family. ArgK/MeaB subfamily. In terms of assembly, homodimer.

Its function is as follows. Probable GTPase. May also bind and hydrolyze ATP. May function as chaperone. The protein is Probable GTPase MT1543 of Mycobacterium tuberculosis (strain CDC 1551 / Oshkosh).